Here is a 674-residue protein sequence, read N- to C-terminus: E3 ubiquitin ligase Rnf157 (674 aa).

Residues 277-316 form an RING-type zinc finger; it reads CVVCLSDVRDTLILPCRHLCLCNACADTLRYQASNCPICR. Disordered stretches follow at residues 376–404 and 433–610; these read LTPS…GSDI and QNSS…TGRE. Polar residues predominate over residues 469 to 508; sequence TPESENLTLSSSGAIDQSSCTGTPLSPTISSPEDPLSSSL. The span at 509 to 526 shows a compositional bias: low complexity; the sequence is AQSIMSMASSHSQQSQLS. Residues 527–537 are compositionally biased toward polar residues; sequence TDTVSSMSGSY. Residues 583–604 are compositionally biased toward acidic residues; the sequence is EEMDAEGNVTEEEFASPEEDDG.

The protein resides in the cytoplasm. It carries out the reaction S-ubiquitinyl-[E2 ubiquitin-conjugating enzyme]-L-cysteine + [acceptor protein]-L-lysine = [E2 ubiquitin-conjugating enzyme]-L-cysteine + N(6)-ubiquitinyl-[acceptor protein]-L-lysine.. Functionally, E3 ubiquitin ligase that ubiquitinates apbb1 for its degradation by the proteasome and thus prevents apoptosis and promotes survival of neurons. Has a dual role in neurons as it is also required for dendrite growth and maintenance for which its ligase activity is not critical. May act as a scaffold molecule to regulate this process. Acts as a downstream effector of the interconnected PI3K and MAPK signaling pathways and thus participates in the regulation of the cell cycle. This Xenopus laevis (African clawed frog) protein is E3 ubiquitin ligase Rnf157 (rnf157).